The primary structure comprises 907 residues: Dual serine/threonine and tyrosine protein kinase (907 aa).

Residues 373–409 (RKKENELYESLMNIANRKQEEMKDMIVETLNTMKEEL) adopt a coiled-coil conformation. One can recognise a Protein kinase domain in the interval 630-884 (PKLGQELGRG…PLLGIVQPML (255 aa)). ATP-binding positions include 636–644 (LGRGQYGVV) and lysine 659. Aspartate 755 functions as the Proton acceptor in the catalytic mechanism.

This sequence belongs to the protein kinase superfamily. Ser/Thr protein kinase family.

It is found in the cytoplasm. It localises to the cell membrane. Its subcellular location is the apical cell membrane. The protein resides in the basolateral cell membrane. The protein localises to the cell junction. It catalyses the reaction L-seryl-[protein] + ATP = O-phospho-L-seryl-[protein] + ADP + H(+). It carries out the reaction L-threonyl-[protein] + ATP = O-phospho-L-threonyl-[protein] + ADP + H(+). The enzyme catalyses L-tyrosyl-[protein] + ATP = O-phospho-L-tyrosyl-[protein] + ADP + H(+). Its function is as follows. Acts as a positive regulator of ERK phosphorylation downstream of fibroblast growth factor-receptor activation. Involved in the regulation of both caspase-dependent apoptosis and caspase-independent cell death. In the skin, it plays a predominant role in suppressing caspase-dependent apoptosis in response to UV stress in a range of dermal cell types. This is Dual serine/threonine and tyrosine protein kinase from Macaca mulatta (Rhesus macaque).